Consider the following 381-residue polypeptide: Lipid-A-disaccharide synthase (381 aa).

This sequence belongs to the LpxB family.

It carries out the reaction a lipid X + a UDP-2-N,3-O-bis[(3R)-3-hydroxyacyl]-alpha-D-glucosamine = a lipid A disaccharide + UDP + H(+). It participates in bacterial outer membrane biogenesis; LPS lipid A biosynthesis. Functionally, condensation of UDP-2,3-diacylglucosamine and 2,3-diacylglucosamine-1-phosphate to form lipid A disaccharide, a precursor of lipid A, a phosphorylated glycolipid that anchors the lipopolysaccharide to the outer membrane of the cell. The sequence is that of Lipid-A-disaccharide synthase from Psychromonas ingrahamii (strain DSM 17664 / CCUG 51855 / 37).